Consider the following 284-residue polypeptide: 2-dehydro-3-deoxyphosphooctonate aldolase (284 aa).

This sequence belongs to the KdsA family.

It is found in the cytoplasm. It catalyses the reaction D-arabinose 5-phosphate + phosphoenolpyruvate + H2O = 3-deoxy-alpha-D-manno-2-octulosonate-8-phosphate + phosphate. Its pathway is carbohydrate biosynthesis; 3-deoxy-D-manno-octulosonate biosynthesis; 3-deoxy-D-manno-octulosonate from D-ribulose 5-phosphate: step 2/3. It functions in the pathway bacterial outer membrane biogenesis; lipopolysaccharide biosynthesis. The polypeptide is 2-dehydro-3-deoxyphosphooctonate aldolase (Aliivibrio fischeri (strain ATCC 700601 / ES114) (Vibrio fischeri)).